Reading from the N-terminus, the 197-residue chain is Phosphoheptose isomerase (197 aa).

The 162-residue stretch at 36 to 197 (MTASLMNNGK…IDCLLLGVEE (162 aa)) folds into the SIS domain. 51 to 53 (NGG) provides a ligand contact to substrate. Zn(2+)-binding residues include H60 and E64. Residues E64, 93 to 94 (ND), 119 to 121 (STS), S124, and Q174 contribute to the substrate site. Zn(2+)-binding residues include Q174 and H182.

Belongs to the SIS family. GmhA subfamily. Homotetramer. Requires Zn(2+) as cofactor.

It localises to the cytoplasm. It catalyses the reaction 2 D-sedoheptulose 7-phosphate = D-glycero-alpha-D-manno-heptose 7-phosphate + D-glycero-beta-D-manno-heptose 7-phosphate. It participates in carbohydrate biosynthesis; D-glycero-D-manno-heptose 7-phosphate biosynthesis; D-glycero-alpha-D-manno-heptose 7-phosphate and D-glycero-beta-D-manno-heptose 7-phosphate from sedoheptulose 7-phosphate: step 1/1. Catalyzes the isomerization of sedoheptulose 7-phosphate in D-glycero-D-manno-heptose 7-phosphate. The protein is Phosphoheptose isomerase of Azoarcus sp. (strain BH72).